The primary structure comprises 469 residues: Putative diacyglycerol O-acyltransferase MT0231 (469 aa).

His-139 serves as the catalytic Proton acceptor.

Belongs to the long-chain O-acyltransferase family.

It carries out the reaction an acyl-CoA + a 1,2-diacyl-sn-glycerol = a triacyl-sn-glycerol + CoA. It functions in the pathway glycerolipid metabolism; triacylglycerol biosynthesis. The chain is Putative diacyglycerol O-acyltransferase MT0231 from Mycobacterium tuberculosis (strain CDC 1551 / Oshkosh).